The primary structure comprises 214 residues: Adenylate kinase (214 aa).

10–15 (GAGKGT) contributes to the ATP binding site. An NMP region spans residues 30–59 (STGDMLRAAVKAGTPLGLEAKKVMDAGQLV). AMP-binding positions include Thr-31, Arg-36, 57–59 (QLV), 85–88 (GFPR), and Gln-92. An LID region spans residues 122–159 (GRRVHPGSGRVYHIVFNQPKVEGKDDVTGEDLAIRPDD). ATP is bound by residues Arg-123 and 132-133 (VY). 2 residues coordinate AMP: Arg-156 and Arg-167. Gln-200 serves as a coordination point for ATP.

The protein belongs to the adenylate kinase family. As to quaternary structure, monomer.

It is found in the cytoplasm. The catalysed reaction is AMP + ATP = 2 ADP. The protein operates within purine metabolism; AMP biosynthesis via salvage pathway; AMP from ADP: step 1/1. In terms of biological role, catalyzes the reversible transfer of the terminal phosphate group between ATP and AMP. Plays an important role in cellular energy homeostasis and in adenine nucleotide metabolism. The protein is Adenylate kinase of Shewanella piezotolerans (strain WP3 / JCM 13877).